Here is a 429-residue protein sequence, read N- to C-terminus: Enolase (429 aa).

Position 167 (Gln-167) interacts with (2R)-2-phosphoglycerate. Glu-209 (proton donor) is an active-site residue. Positions 246, 289, and 316 each coordinate Mg(2+). (2R)-2-phosphoglycerate is bound by residues Lys-341, Arg-370, Ser-371, and Lys-392. Lys-341 acts as the Proton acceptor in catalysis.

Belongs to the enolase family. In terms of assembly, component of the RNA degradosome, a multiprotein complex involved in RNA processing and mRNA degradation. Requires Mg(2+) as cofactor.

The protein localises to the cytoplasm. It localises to the secreted. The protein resides in the cell surface. It carries out the reaction (2R)-2-phosphoglycerate = phosphoenolpyruvate + H2O. Its pathway is carbohydrate degradation; glycolysis; pyruvate from D-glyceraldehyde 3-phosphate: step 4/5. Catalyzes the reversible conversion of 2-phosphoglycerate (2-PG) into phosphoenolpyruvate (PEP). It is essential for the degradation of carbohydrates via glycolysis. This Pseudomonas entomophila (strain L48) protein is Enolase.